A 228-amino-acid chain; its full sequence is MSKSHLLKYLLISPNLPVGGFCYSEGLESYLNTKDLKDSNSVKELIISELKIGQIRLDARLLLDFFDIFNELNEDKNFKNNLQKLLSLDKWILSSKDSVEMRAQQIQMANSLFDLNKEFGFEYLYKKNKKNSWPLAWSWSCYCFEITKLEMVETFLYAWSANQLSAALRIIPIGSTKAQLIQRDLLEIISKVSREIMDKEIDDIYFGNVGLAMAQQNHNELYTKLFRN.

Belongs to the UreF family. As to quaternary structure, ureD, UreF and UreG form a complex that acts as a GTP-hydrolysis-dependent molecular chaperone, activating the urease apoprotein by helping to assemble the nickel containing metallocenter of UreC. The UreE protein probably delivers the nickel.

It localises to the cytoplasm. Required for maturation of urease via the functional incorporation of the urease nickel metallocenter. This is Urease accessory protein UreF from Prochlorococcus marinus (strain MIT 9215).